The chain runs to 283 residues: Fructose-1,6-bisphosphatase class 1 (283 aa).

Mg(2+) is bound by residues E67, D86, L88, and D89. Residues 89-92 (DGSS), Y195, and K225 each bind substrate. Position 231 (E231) interacts with Mg(2+).

It belongs to the FBPase class 1 family. In terms of assembly, homotetramer. It depends on Mg(2+) as a cofactor.

Its subcellular location is the cytoplasm. The catalysed reaction is beta-D-fructose 1,6-bisphosphate + H2O = beta-D-fructose 6-phosphate + phosphate. It participates in carbohydrate biosynthesis; gluconeogenesis. The polypeptide is Fructose-1,6-bisphosphatase class 1 (Natronomonas pharaonis (strain ATCC 35678 / DSM 2160 / CIP 103997 / JCM 8858 / NBRC 14720 / NCIMB 2260 / Gabara) (Halobacterium pharaonis)).